The sequence spans 728 residues: Double-strand break repair protein mre-11 (728 aa).

The span at 1–12 shows a compositional bias: acidic residues; the sequence is MCGSDDSFDDFV. The disordered stretch occupies residues 1 to 45; the sequence is MCGSDDSFDDFVPDSQEPASSRTRNQDHLDDDEVPCSQRPDAAND. Positions 73, 75, 113, and 181 each coordinate Mn(2+). H182 serves as the catalytic Proton donor. 3 residues coordinate Mn(2+): H269, H301, and H303. The segment at 601-728 is disordered; it reads KNPVADVEME…PSKKRDLSFF (128 aa). Positions 607–616 are enriched in acidic residues; that stretch reads VEMEEDEDDP. Polar residues predominate over residues 622 to 632; it reads PQSTSRTNYAS. Positions 634–645 are enriched in acidic residues; the sequence is SEDEVANSDEEM.

This sequence belongs to the MRE11/RAD32 family. As to quaternary structure, component of the MRN complex composed of two heterodimers rad-50 and mre-11 associated with a single nbs-1. Mn(2+) is required as a cofactor.

The protein resides in the nucleus. It localises to the chromosome. Functionally, core component of the MRN complex, which plays a central role in double-strand break (DSB) repair, DNA recombination, maintenance of telomere integrity and meiosis. The MRN complex is involved in the repair of DNA double-strand breaks (DSBs) via homologous recombination (HR), an error-free mechanism which primarily occurs during S and G2 phases. The complex (1) mediates the end resection of damaged DNA, which generates proper single-stranded DNA, a key initial steps in HR, and is (2) required for the recruitment of other repair factors and efficient activation of ATM and ATR upon DNA damage. Within the MRN complex, mre-11 possesses both single-strand endonuclease activity and double-strand-specific 3'-5' exonuclease activity. Mre-11 first endonucleolytically cleaves the 5' strand at DNA DSB ends to prevent non-homologous end joining (NHEJ) and licence HR. It then generates a single-stranded DNA gap via 3' to 5' exonucleolytic degradation, which is required for single-strand invasion and recombination. Required for meiotic crossing over and chiasma formation. Pachytene morphology and homolog pairing are normal. Vital in long term for maintenance of reproductive capacity of subsequent generations. This chain is Double-strand break repair protein mre-11, found in Caenorhabditis elegans.